Reading from the N-terminus, the 757-residue chain is Polyribonucleotide nucleotidyltransferase (757 aa).

Residues aspartate 487 and aspartate 493 each coordinate Mg(2+). A KH domain is found at 554 to 613 (PRITTVRVKPDQIRLIIGPGGKTIKGIVDQTGVAIDVEDDGTVNVASADSDAVKRALDII). In terms of domain architecture, S1 motif spans 623–691 (GATYKGTVKR…REGKIRLSRR (69 aa)). The segment at 697–757 (PEGEEGDRAR…PPRERRERRS (61 aa)) is disordered. Composition is skewed to basic and acidic residues over residues 702–711 (GDRARERMAQ) and 719–757 (PRRD…ERRS).

The protein belongs to the polyribonucleotide nucleotidyltransferase family. Mg(2+) serves as cofactor.

The protein localises to the cytoplasm. The catalysed reaction is RNA(n+1) + phosphate = RNA(n) + a ribonucleoside 5'-diphosphate. Functionally, involved in mRNA degradation. Catalyzes the phosphorolysis of single-stranded polyribonucleotides processively in the 3'- to 5'-direction. The protein is Polyribonucleotide nucleotidyltransferase of Sorangium cellulosum (strain So ce56) (Polyangium cellulosum (strain So ce56)).